The following is a 157-amino-acid chain: 1,4-dihydroxy-2-naphthoyl-CoA thioesterase 2 (157 aa).

Residue Glu56 is part of the active site. Residues 154 to 156 (ISK) carry the Microbody targeting signal motif.

It belongs to the 4-hydroxybenzoyl-CoA thioesterase family. DHNA-CoA hydrolase subfamily. Homotetramers.

Its subcellular location is the peroxisome. The protein operates within cofactor biosynthesis; phylloquinone biosynthesis. It participates in quinol/quinone metabolism; 1,4-dihydroxy-2-naphthoate biosynthesis; 1,4-dihydroxy-2-naphthoate from chorismate: step 7/7. Its function is as follows. Catalyzes the hydrolysis of the thioester bond of 1,4-dihydroxy-2-naphthoyl-CoA (DHNA-CoA) in peroxisomes, a necessary step to form the naphthoquinone ring of phylloquinone (vitamin K(1)). Displayed also slight thioesterase activity towards benzoyl-CoA. Is not active on phenylacetyl-CoA, succinyl-CoA and palmitoyl-CoA thioesters. This is 1,4-dihydroxy-2-naphthoyl-CoA thioesterase 2 from Arabidopsis thaliana (Mouse-ear cress).